The following is a 179-amino-acid chain: Sperm surface protein Sp17 (179 aa).

Positions 72–109 (HAFKDEPPEKSETQKIQPEKVAIEKETMPQETVKEKET) are enriched in basic and acidic residues. Disordered stretches follow at residues 72 to 138 (HAFK…EGLL) and 159 to 179 (TRKE…ENNE). Residues 116-135 (EPTEEPQKEEEEEEDEEDLE) show a composition bias toward acidic residues. The IQ domain maps to 143–172 (MQDAAVKIQAVFRGHKTRKEYLKKRDSTDE). Basic and acidic residues predominate over residues 161 to 170 (KEYLKKRDST).

In terms of assembly, homodimer. May interact with ROPN1. As to expression, testis- and sperm-specific.

The protein localises to the membrane. Functionally, sperm surface zona pellucida binding protein. Helps to bind spermatozoa to the zona pellucida with high affinity. Might function in binding zona pellucida and carbohydrates. The protein is Sperm surface protein Sp17 (SPA17) of Monodelphis domestica (Gray short-tailed opossum).